We begin with the raw amino-acid sequence, 707 residues long: Methionine--tRNA ligase (707 aa).

A 'HIGH' region motif is present at residues 13 to 23 (PYANGNFHIGH). Zn(2+) contacts are provided by cysteine 147, cysteine 150, cysteine 160, and cysteine 163. The short motif at 344-348 (KMSKS) is the 'KMSKS' region element. Position 347 (lysine 347) interacts with ATP. Residues 601–707 (DFAKVDLRIA…PGATPGMRIH (107 aa)) enclose the tRNA-binding domain.

The protein belongs to the class-I aminoacyl-tRNA synthetase family. MetG type 1 subfamily. In terms of assembly, homodimer. Zn(2+) is required as a cofactor.

The protein localises to the cytoplasm. The catalysed reaction is tRNA(Met) + L-methionine + ATP = L-methionyl-tRNA(Met) + AMP + diphosphate. In terms of biological role, is required not only for elongation of protein synthesis but also for the initiation of all mRNA translation through initiator tRNA(fMet) aminoacylation. This Polaromonas naphthalenivorans (strain CJ2) protein is Methionine--tRNA ligase.